A 396-amino-acid chain; its full sequence is Formate-dependent phosphoribosylglycinamide formyltransferase (396 aa).

N(1)-(5-phospho-beta-D-ribosyl)glycinamide-binding positions include 24–25 and glutamate 84; that span reads EL. Residues arginine 116, lysine 157, 162 to 167, 197 to 200, and glutamate 205 each bind ATP; these read SSGKGQ and EGFV. The ATP-grasp domain occupies 121–310; that stretch reads RLAAETLGIK…EFALHVRAIL (190 aa). 2 residues coordinate Mg(2+): glutamate 269 and glutamate 281. N(1)-(5-phospho-beta-D-ribosyl)glycinamide contacts are provided by residues aspartate 288, lysine 359, and 366–367; that span reads RR.

It belongs to the PurK/PurT family. As to quaternary structure, homodimer.

The catalysed reaction is N(1)-(5-phospho-beta-D-ribosyl)glycinamide + formate + ATP = N(2)-formyl-N(1)-(5-phospho-beta-D-ribosyl)glycinamide + ADP + phosphate + H(+). It participates in purine metabolism; IMP biosynthesis via de novo pathway; N(2)-formyl-N(1)-(5-phospho-D-ribosyl)glycinamide from N(1)-(5-phospho-D-ribosyl)glycinamide (formate route): step 1/1. Its function is as follows. Involved in the de novo purine biosynthesis. Catalyzes the transfer of formate to 5-phospho-ribosyl-glycinamide (GAR), producing 5-phospho-ribosyl-N-formylglycinamide (FGAR). Formate is provided by PurU via hydrolysis of 10-formyl-tetrahydrofolate. This is Formate-dependent phosphoribosylglycinamide formyltransferase from Psychromonas ingrahamii (strain DSM 17664 / CCUG 51855 / 37).